We begin with the raw amino-acid sequence, 679 residues long: MDRVTRYPILGIPQAHRGTGLVLDGDTSYTYHLVCMGPEASGWGQDEPQTWPTDHRAQQGVQRQGVSYSVHAYTGQPSPRGLHSENREDEGWQVYRLGARDAHQGRPTWALRPEDGEDKEMKTYRLDAGDADPRRLCDLERERWAVIQGQAVRKSSTVATLQGTPDHGDPRTPGPPRSTPLEENVVDREQIDFLAARQQFLSLEQANKGAPHSSPARGTPAGTTPGASQAPKAFNKPHLANGHVVPIKPQVKGVVREENKVRAVPTWASVQVVDDPGSLASVESPGTPKETPIEREIRLAQEREADLREQRGLRQATDHQELVEIPTRPLLTKLSLITAPRRERGRPSLYVQRDIVQETQREEDHRREGLHVGRASTPDWVSEGPQPGLRRALSSDSILSPAPDARAADPAPEVRKVNRIPPDAYQPYLSPGTPQLEFSAFGAFGKPSSLSTAEAKAATSPKATMSPRHLSESSGKPLSTKQEASKPPRGCPQANRGVVRWEYFRLRPLRFRAPDEPQQAQVPHVWGWEVAGAPALRLQKSQSSDLLERERESVLRREQEVAEERRNALFPEVFSPTPDENSDQNSRSSSQASGITGSYSVSESPFFSPIHLHSNVAWTVEDPVDSAPPGQRKKEQWYAGINPSDGINSEVLEAIRVTRHKNAMAERWESRIYASEEDD.

At Ser-78 the chain carries Phosphoserine; by CDK1; in vitro. 2 disordered regions span residues Ala-151–Glu-182 and Ala-206–Val-245. A compositionally biased stretch (polar residues) spans Arg-153–Gly-163. The residue at position 156 (Ser-156) is a Phosphoserine. 2 positions are modified to phosphothreonine; by CDK1; in vitro: Thr-164 and Thr-172. Thr-179 carries the post-translational modification Phosphothreonine. Ser-214 is modified (phosphoserine; by CDK1; in vitro). A Phosphothreonine modification is found at Thr-219. A Phosphothreonine; by CDK1; in vitro modification is found at Thr-224. A Phosphoserine; by CDK1; in vitro modification is found at Ser-284. A Phosphothreonine; by CDK1; in vitro modification is found at Thr-287. Ser-348 is subject to Phosphoserine. Residues Gln-360–His-371 show a composition bias toward basic and acidic residues. The disordered stretch occupies residues Gln-360–Arg-419. A Phosphothreonine; by CDK1; in vitro modification is found at Thr-377. Ser-382 is modified (phosphoserine; by CDK1; in vitro). 3 positions are modified to phosphoserine; by PLK1; in vitro: Ser-394, Ser-395, and Ser-397. Ser-400 carries the phosphoserine modification. Residues Pro-401–Ala-411 are compositionally biased toward low complexity. Residue Ser-430 is modified to Phosphoserine. Residues Pro-447–Ala-494 form a disordered region. Ser-471 is modified (phosphoserine; by PLK1; in vitro). Over residues Glu-472–Gln-482 the composition is skewed to polar residues. Phosphoserine is present on residues Ser-541 and Ser-543. A coiled-coil region spans residues Asp-545–Leu-569. Basic and acidic residues predominate over residues Arg-557 to Asn-567. Disordered regions lie at residues Arg-557 to Ser-598 and Asp-622 to Pro-643. At Ser-575 the chain carries Phosphoserine; by CDK1; in vitro. At Thr-577 the chain carries Phosphothreonine. Residues Ser-582 and Ser-586 each carry the phosphoserine; by PLK1; in vitro modification. Over residues Asp-583–Ser-593 the composition is skewed to low complexity. Ser-675 carries the phosphoserine modification.

The protein belongs to the MISP family. As to quaternary structure, associates with F-actin. Interacts with DCTN1; this interaction regulates DCTN1 distribution at the cell cortex. Interacts with PTK2/FAK and MAPRE1. Phosphorylated by CDK1 and PLK1. CDK1 is the priming kinase for PLK1 phosphorylation. Phosphorylation by PLK1 is required for proper spindle orientation at metaphase.

It localises to the cell junction. The protein localises to the focal adhesion. The protein resides in the cytoplasm. It is found in the cytoskeleton. Its subcellular location is the cell cortex. Functionally, plays a role in mitotic spindle orientation and mitotic progression. Regulates the distribution of dynactin at the cell cortex in a PLK1-dependent manner, thus stabilizing cortical and astral microtubule attachments required for proper mitotic spindle positioning. May link microtubules to the actin cytospkeleton and focal adhesions. May be required for directed cell migration and centrosome orientation. May also be necessary for proper stacking of the Golgi apparatus. The chain is Mitotic interactor and substrate of PLK1 from Homo sapiens (Human).